The following is a 171-amino-acid chain: S-ribosylhomocysteine lyase (171 aa).

3 residues coordinate Fe cation: H54, H58, and C128.

It belongs to the LuxS family. Homodimer. The cofactor is Fe cation.

It carries out the reaction S-(5-deoxy-D-ribos-5-yl)-L-homocysteine = (S)-4,5-dihydroxypentane-2,3-dione + L-homocysteine. Involved in the synthesis of autoinducer 2 (AI-2) which is secreted by bacteria and is used to communicate both the cell density and the metabolic potential of the environment. The regulation of gene expression in response to changes in cell density is called quorum sensing. Catalyzes the transformation of S-ribosylhomocysteine (RHC) to homocysteine (HC) and 4,5-dihydroxy-2,3-pentadione (DPD). The chain is S-ribosylhomocysteine lyase from Proteus mirabilis (strain HI4320).